Reading from the N-terminus, the 41-residue chain is Large ribosomal subunit protein bL36 (41 aa).

This sequence belongs to the bacterial ribosomal protein bL36 family.

This is Large ribosomal subunit protein bL36 from Beijerinckia indica subsp. indica (strain ATCC 9039 / DSM 1715 / NCIMB 8712).